The chain runs to 618 residues: MADEGKSYNEHDDRVSFPQRRKKGRGPFRWKCGEGNRRSGRGGSGVQSSRFEEDDGDVAMNDPQDGPRVRYNPYTNRPNRRGDGWHDRDRIHITVRRDRAPAERGGAGTSQDGTTKNWFKITIPYGRKYDKTWLLSMIQSKCSVPFNPIEFHYENTRAHFFVEDATTASALKGVNHKIQDRENRRISIIINASAPPYTVQNELKPEQIEQLKLIMSKRYDGNQQALDLKGLRSDPDLVAQNIDVVLNRRSCMAATLRIIEENIPELLSLNLSSNRLYKLDDMSSIVQKAPNLKTLNLSGNELKTERELDKIKGLKLEELWLDRNPMCDNFGDQSSYISAIRERFPKLLRLDGHELPPPISFDVEAPTMLPPCKGSYFGTENLKSLVLRFLQQYYVIYDSGDRQGLLYAYHDGACCSLSIPYNPQNPVRKNLAEYVKDSRNVKKLKEPTQRFRLLKHTRLNVVAFLNELPKTQHDVNAFVVDISAQTSTLLCFSVNGVFKEVDGKSRDSLRAFTRTFIAVPASNSGLCIVNDELFVRNASPEEIQRAFAMSAPTPSSSPVPTLSPEQQEMLQAFSTQSGMNLEWSQKCLQDNNWDYTRSAQAFTLLKAKGEIPEVAFMK.

Residues 1–15 show a composition bias toward basic and acidic residues; that stretch reads MADEGKSYNEHDDRV. The interval 1–113 is disordered; that stretch reads MADEGKSYNE…RGGAGTSQDG (113 aa). At alanine 2 the chain carries N-acetylalanine. The tract at residues 2-59 is minor non-specific RNA-binding; that stretch reads ADEGKSYNEHDDRVSFPQRRKKGRGPFRWKCGEGNRRSGRGGSGVQSSRFEEDDGDVA. Residues 2 to 117 form an RNA-binding (RBD) region; sequence ADEGKSYNEH…GTSQDGTTKN (116 aa). The segment at 2–197 is interaction with ALYREF/THOC4 and LUZP4; it reads ADEGKSYNEH…IIINASAPPY (196 aa). The span at 19–28 shows a compositional bias: basic residues; it reads QRRKKGRGPF. Arginine 41 carries the post-translational modification Asymmetric dimethylarginine; alternate. The residue at position 41 (arginine 41) is an Omega-N-methylarginine; alternate. A major non-specific RNA-binding region spans residues 60–117; that stretch reads MNDPQDGPRVRYNPYTNRPNRRGDGWHDRDRIHITVRRDRAPAERGGAGTSQDGTTKN. The segment at 60–117 is RNA binding; that stretch reads MNDPQDGPRVRYNPYTNRPNRRGDGWHDRDRIHITVRRDRAPAERGGAGTSQDGTTKN. The short motif at 66 to 99 is the Nuclear localization signal element; sequence GPRVRYNPYTNRPNRRGDGWHDRDRIHITVRRDR. Over residues 80 to 102 the composition is skewed to basic and acidic residues; that stretch reads RRGDGWHDRDRIHITVRRDRAPA. Residues 82–109 carry the Nuclear export signal motif; the sequence is GDGWHDRDRIHITVRRDRAPAERGGAGT. The region spanning 118–197 is the RRM domain; sequence WFKITIPYGR…IIINASAPPY (80 aa). Tyrosine 125 bears the 3'-nitrotyrosine mark. LRR repeat units follow at residues 265–290, 291–314, 315–342, and 343–370; these read ELLS…QKAP, NLKT…IKGL, KLEE…AIRE, and RFPK…TMLP. One can recognise an NTF2 domain in the interval 385 to 535; the sequence is LVLRFLQQYY…LCIVNDELFV (151 aa). Residues 564 to 618 enclose the TAP-C domain; that stretch reads PEQQEMLQAFSTQSGMNLEWSQKCLQDNNWDYTRSAQAFTLLKAKGEIPEVAFMK.

The protein belongs to the NXF family. As to quaternary structure, heterodimer (via NTF2 domain) with NXT1. The formation of NXF1-NXT1 heterodimers is required for the NXF1-mediated nuclear mRNA export. Forms a complex with RANBP2/NUP358, NXT1 and RANGAP1. Associates with the exon junction complex (EJC). Associates with the transcription/export (TREX) complex. Found in a mRNA complex with UPF3A and UPF3B. Found in a post-splicing complex with RBM8A, UPF1, UPF2, UPF3A, UPF3B and RNPS1. Interacts (via N-terminus) with DHX9 (via N-terminus); this interaction is direct and negatively regulates NXF1-mediated nuclear export of constitutive transport element (CTE)-containing cellular mRNAs. Interacts with FYTTD1/UIF. Interacts with EIF4A3. Interacts with NUP42. Interacts with ALYREF/THOC4. Interacts with CHTOP. Interacts with FRG1 (via N-terminus). Interacts with LUZP4. Interacts with FMR1; the interaction occurs in a mRNA-dependent and polyribosomes-independent manner in the nucleus. Interacts with CPSF6 (via N-terminus); this interaction is direct. Interacts with RBM15. Interacts with RBM15B. Interacts with MCM3AP; this interaction is not mediated by RNA. Interacts with DDX3X (via C-terminus); this interaction may be partly involved in DDX3X nuclear export and in NXF1 localization to stress granules. Interacts with PABPC1/PABP1. As to expression, expressed ubiquitously.

The protein localises to the nucleus. The protein resides in the nucleoplasm. It is found in the nucleus speckle. It localises to the cytoplasm. Its subcellular location is the nuclear pore complex. The protein localises to the nucleus envelope. The protein resides in the stress granule. Functionally, involved in the nuclear export of mRNA species bearing retroviral constitutive transport elements (CTE) and in the export of mRNA from the nucleus to the cytoplasm (TAP/NFX1 pathway). The NXF1-NXT1 heterodimer is involved in the export of HSP70 mRNA in conjunction with ALYREF/THOC4 and THOC5 components of the TREX complex. ALYREF/THOC4-bound mRNA is thought to be transferred to the NXF1-NXT1 heterodimer for export. Also involved in nuclear export of m6A-containing mRNAs: interaction between SRSF3 and YTHDC1 facilitates m6A-containing mRNA-binding to both SRSF3 and NXF1, promoting mRNA nuclear export. The protein is Nuclear RNA export factor 1 (Nxf1) of Mus musculus (Mouse).